Consider the following 61-residue polypeptide: UPF0434 protein Pput_3813 (61 aa).

Belongs to the UPF0434 family.

This Pseudomonas putida (strain ATCC 700007 / DSM 6899 / JCM 31910 / BCRC 17059 / LMG 24140 / F1) protein is UPF0434 protein Pput_3813.